The primary structure comprises 213 residues: Pyrrolidone-carboxylate peptidase (213 aa).

Residues Glu78, Cys141, and His165 contribute to the active site.

It belongs to the peptidase C15 family. As to quaternary structure, homotetramer.

It is found in the cytoplasm. The enzyme catalyses Release of an N-terminal pyroglutamyl group from a polypeptide, the second amino acid generally not being Pro.. In terms of biological role, removes 5-oxoproline from various penultimate amino acid residues except L-proline. The polypeptide is Pyrrolidone-carboxylate peptidase (Finegoldia magna (strain ATCC 29328 / DSM 20472 / WAL 2508) (Peptostreptococcus magnus)).